Here is a 94-residue protein sequence, read N- to C-terminus: DNA-binding protein HU (94 aa).

It belongs to the bacterial histone-like protein family. In terms of assembly, homodimer.

Histone-like DNA-binding protein which is capable of wrapping DNA to stabilize it, and thus to prevent its denaturation under extreme environmental conditions. It is essential for heterocyst differentiation. This is DNA-binding protein HU (hup) from Nostoc sp. (strain PCC 7120 / SAG 25.82 / UTEX 2576).